The following is a 287-amino-acid chain: NAD-dependent protein deacylase sir-2.3 (287 aa).

Residues 10–287 (TELCENSLKK…YRISDVLKEM (278 aa)) form the Deacetylase sirtuin-type domain. Residues 35–55 (GAGI…VGLY) and 116–119 (QNVD) each bind NAD(+). The active-site Proton acceptor is the His134. The Zn(2+) site is built by Cys142, Cys145, Cys196, and Cys199. NAD(+) is bound by residues 236–238 (GTS), 262–264 (NIG), and Ile280.

It belongs to the sirtuin family. Class II subfamily. Interacts with pyc-1, pcca-1 and mccc-1. It depends on Zn(2+) as a cofactor. In terms of tissue distribution, ubiquitously expressed with high expression in the pharynx, body wall muscles and gonad. Strong expression in a subset of non-neuronal cells in the head.

Its subcellular location is the mitochondrion matrix. It is found in the mitochondrion. It catalyses the reaction N(6)-acetyl-L-lysyl-[protein] + NAD(+) + H2O = 2''-O-acetyl-ADP-D-ribose + nicotinamide + L-lysyl-[protein]. Functionally, NAD-dependent protein deacylase. Catalyzes the NAD-dependent hydrolysis of acyl groups from lysine residues. Plays a role in oxidative stress resistance. Might promote neuronal cell death under ischemic conditions and cell death in touch neurons induced by mec-4 channel hyperactivation, possibly downstream of the insulin-like receptor daf-2. Might attenuate the reactive oxygen species (ROS) scavenging system, that eliminates ROS in ischemic conditions, under dietary deprivation and when glycolysis is blocked. The polypeptide is NAD-dependent protein deacylase sir-2.3 (sir-2.3) (Caenorhabditis elegans).